Reading from the N-terminus, the 130-residue chain is Small ribosomal subunit protein uS9 (130 aa).

The segment at 111 to 130 (VERKKVGLHKARRATQFSKR) is disordered. Residues 116–130 (VGLHKARRATQFSKR) show a composition bias toward basic residues.

The protein belongs to the universal ribosomal protein uS9 family.

In Xylella fastidiosa (strain M23), this protein is Small ribosomal subunit protein uS9.